We begin with the raw amino-acid sequence, 191 residues long: Transcriptional regulator MET32 (191 aa).

The tract at residues 70–96 (KKENALPKPPKSSKSKPQDRRNSTGEK) is disordered. The span at 85-96 (KPQDRRNSTGEK) shows a compositional bias: basic and acidic residues. The C2H2-type 1 zinc finger occupies 98–120 (FKCAKCSLEFSRSSDLRRHEKTH). Residues 126–150 (NICPQCGKGFARKDALKRHYDTLTC) form a C2H2-type 2; atypical zinc finger.

As to quaternary structure, interacts with MET4 and MET28.

It localises to the cytoplasm. The protein resides in the nucleus. Its function is as follows. Auxiliary transcriptional regulator of sulfur amino acid metabolism. Involved in the transcriptional activation of MET28. In Saccharomyces cerevisiae (strain ATCC 204508 / S288c) (Baker's yeast), this protein is Transcriptional regulator MET32 (MET32).